The following is a 640-amino-acid chain: Biosynthetic arginine decarboxylase (640 aa).

The residue at position 105 (Lys-105) is an N6-(pyridoxal phosphate)lysine. 290 to 300 (FDVGGGLAIDY) lines the substrate pocket.

Belongs to the Orn/Lys/Arg decarboxylase class-II family. SpeA subfamily. Requires Mg(2+) as cofactor. Pyridoxal 5'-phosphate is required as a cofactor.

It carries out the reaction L-arginine + H(+) = agmatine + CO2. Its function is as follows. Catalyzes the biosynthesis of agmatine from arginine. The protein is Biosynthetic arginine decarboxylase of Vibrio vulnificus (strain CMCP6).